A 263-amino-acid polypeptide reads, in one-letter code: Undecaprenyl-diphosphatase 2 (263 aa).

Helical transmembrane passes span 15–37 (GLTE…LIGF), 42–62 (AKVF…VIFW), 79–99 (SLNL…GVLF), 107–127 (LFGP…MIVA), 142–162 (ITYK…WPGF), 183–203 (AEYT…LDLI), 216–236 (LFVT…VSFL), and 242–262 (VKLT…YFFI).

Belongs to the UppP family.

It is found in the cell membrane. It catalyses the reaction di-trans,octa-cis-undecaprenyl diphosphate + H2O = di-trans,octa-cis-undecaprenyl phosphate + phosphate + H(+). Catalyzes the dephosphorylation of undecaprenyl diphosphate (UPP). Confers resistance to bacitracin. The sequence is that of Undecaprenyl-diphosphatase 2 from Bacillus cereus (strain ATCC 14579 / DSM 31 / CCUG 7414 / JCM 2152 / NBRC 15305 / NCIMB 9373 / NCTC 2599 / NRRL B-3711).